Here is a 1055-residue protein sequence, read N- to C-terminus: Vacuolar protein sorting-associated protein 54 (1055 aa).

Residues 363-383 (TKKIIEVHQKYEQKKHLLAKL) are a coiled coil. The interval 774–794 (IDDGPTKKPFKRTGSSATIDS) is disordered.

Belongs to the VPS54 family. Component of the Golgi-associated retrograde protein (GARP) complex, also called VFT (VPS fifty-three) complex, composed of VPS51, VPS52, VPS53 and VPS54.

The protein localises to the golgi apparatus. It localises to the trans-Golgi network. Acts as a component of the GARP complex that is involved in retrograde transport from early and late endosomes to the trans-Golgi network (TGN). The GARP complex facilitates tethering as well as SNARE complex assembly at the Golgi. The polypeptide is Vacuolar protein sorting-associated protein 54 (vps-54) (Caenorhabditis briggsae).